An 81-amino-acid chain; its full sequence is Translational regulator CsrA (81 aa).

The protein belongs to the CsrA/RsmA family. As to quaternary structure, homodimer; the beta-strands of each monomer intercalate to form a hydrophobic core, while the alpha-helices form wings that extend away from the core.

The protein localises to the cytoplasm. Its function is as follows. A translational regulator that binds mRNA to regulate translation initiation and/or mRNA stability. Usually binds in the 5'-UTR at or near the Shine-Dalgarno sequence preventing ribosome-binding, thus repressing translation. Its main target seems to be the major flagellin gene, while its function is anatagonized by FliW. The protein is Translational regulator CsrA of Desulforapulum autotrophicum (strain ATCC 43914 / DSM 3382 / VKM B-1955 / HRM2) (Desulfobacterium autotrophicum).